Reading from the N-terminus, the 83-residue chain is Cytochrome b559 subunit alpha (83 aa).

The helical transmembrane segment at 21–35 (VIHSITIPSLFIAGW) threads the bilayer. Histidine 23 is a binding site for heme.

Belongs to the PsbE/PsbF family. In terms of assembly, heterodimer of an alpha subunit and a beta subunit. PSII is composed of 1 copy each of membrane proteins PsbA, PsbB, PsbC, PsbD, PsbE, PsbF, PsbH, PsbI, PsbJ, PsbK, PsbL, PsbM, PsbT, PsbX, PsbY, PsbZ, Psb30/Ycf12, at least 3 peripheral proteins of the oxygen-evolving complex and a large number of cofactors. It forms dimeric complexes. It depends on heme b as a cofactor.

It localises to the plastid. It is found in the chloroplast thylakoid membrane. This b-type cytochrome is tightly associated with the reaction center of photosystem II (PSII). PSII is a light-driven water:plastoquinone oxidoreductase that uses light energy to abstract electrons from H(2)O, generating O(2) and a proton gradient subsequently used for ATP formation. It consists of a core antenna complex that captures photons, and an electron transfer chain that converts photonic excitation into a charge separation. The sequence is that of Cytochrome b559 subunit alpha from Tupiella akineta (Green alga).